Here is a 328-residue protein sequence, read N- to C-terminus: MINIAIDAMGGDFGEKPIIEGVLKALEAKPFNAILVGNSKILKPLIPKKLEQYIQYEEASEIFSMNGNATDALKNKETTIYKAINLLKEKKVDAVVSAGHSGASMSLATLRLGRLKGISRPAIATLMPNIVNRTLLLDVGANTDCKAENLFQFAIMGEVYAREIMQIQKPRLALLSNGEEECKGNELTKESHQLMKKIPNFIGNAEGRDIFNGEIDVLVCDGFDGNVILKACEGVATAIFQLLKNEVKQSFISKIGALLMKSSFKKLKKHTDWQEYGGAPLLGVNGCVIISHGKSDSRAIKNAIFQAINFSQSHINELIENELGKYNA.

This sequence belongs to the PlsX family. Homodimer. Probably interacts with PlsY.

Its subcellular location is the cytoplasm. It carries out the reaction a fatty acyl-[ACP] + phosphate = an acyl phosphate + holo-[ACP]. The protein operates within lipid metabolism; phospholipid metabolism. Functionally, catalyzes the reversible formation of acyl-phosphate (acyl-PO(4)) from acyl-[acyl-carrier-protein] (acyl-ACP). This enzyme utilizes acyl-ACP as fatty acyl donor, but not acyl-CoA. The chain is Phosphate acyltransferase from Campylobacter jejuni (strain RM1221).